The primary structure comprises 355 residues: Erythronate-4-phosphate dehydrogenase (355 aa).

Positions 45 and 66 each coordinate substrate. Asp-146 serves as a coordination point for NAD(+). Arg-206 is an active-site residue. NAD(+) is bound at residue Asp-229. Residue Glu-234 is part of the active site. Residue His-251 is the Proton donor of the active site. Gly-254 contacts NAD(+). Tyr-255 is a binding site for substrate.

Belongs to the D-isomer specific 2-hydroxyacid dehydrogenase family. PdxB subfamily. In terms of assembly, homodimer.

The protein resides in the cytoplasm. The catalysed reaction is 4-phospho-D-erythronate + NAD(+) = (R)-3-hydroxy-2-oxo-4-phosphooxybutanoate + NADH + H(+). It participates in cofactor biosynthesis; pyridoxine 5'-phosphate biosynthesis; pyridoxine 5'-phosphate from D-erythrose 4-phosphate: step 2/5. Functionally, catalyzes the oxidation of erythronate-4-phosphate to 3-hydroxy-2-oxo-4-phosphonooxybutanoate. This chain is Erythronate-4-phosphate dehydrogenase, found in Acinetobacter baumannii (strain AB307-0294).